The sequence spans 125 residues: Basic leucine zipper transcriptional factor ATF-like (125 aa).

The span at 1-14 (MPHSSDSSDSSFSR) shows a compositional bias: low complexity. The tract at residues 1–58 (MPHSSDSSDSSFSRSPPPGKQDSSDDVRKVQRREKNRIAAQKSRQRQTQKADTLHLES) is disordered. Residues 26–89 (DVRKVQRREK…KYFTSVLSSH (64 aa)) enclose the bZIP domain. The interval 28 to 50 (RKVQRREKNRIAAQKSRQRQTQK) is basic motif. At S43 the chain carries Phosphoserine. T48 is subject to Phosphothreonine. Residues 54 to 75 (LHLESEDLEKQNAALRKEIKQL) are leucine-zipper.

This sequence belongs to the bZIP family. As to quaternary structure, heterodimer; mainly heterodimerizes with JUNB. The BATF-JUNB heterodimer interacts with IRF4 and IRF8. Interacts (via bZIP domain) with IRF4 and IRF8; the interaction is direct. Also forms heterodimers with JUN and JUND. Interacts with IFI35. Post-translationally, phosphorylated on serine and threonine residues and at least one tyrosine residue. Phosphorylation at Ser-43 inhibit DNA binding activity and transforms it as a negative regulator of AP-1 mediated transcription.

The protein localises to the nucleus. The protein resides in the cytoplasm. Its function is as follows. AP-1 family transcription factor that controls the differentiation of lineage-specific cells in the immune system: specifically mediates the differentiation of T-helper 17 cells (Th17), follicular T-helper cells (TfH), CD8(+) dendritic cells and class-switch recombination (CSR) in B-cells. Acts via the formation of a heterodimer with JUNB that recognizes and binds DNA sequence 5'-TGA[CG]TCA-3'. The BATF-JUNB heterodimer also forms a complex with IRF4 (or IRF8) in immune cells, leading to recognition of AICE sequence (5'-TGAnTCA/GAAA-3'), an immune-specific regulatory element, followed by cooperative binding of BATF and IRF4 (or IRF8) and activation of genes. Controls differentiation of T-helper cells producing interleukin-17 (Th17 cells) by binding to Th17-associated gene promoters: regulates expression of the transcription factor RORC itself and RORC target genes such as IL17 (IL17A or IL17B). Also involved in differentiation of follicular T-helper cells (TfH) by directing expression of BCL6 and MAF. In B-cells, involved in class-switch recombination (CSR) by controlling the expression of both AICDA and of germline transcripts of the intervening heavy-chain region and constant heavy-chain region (I(H)-C(H)). Following infection, can participate in CD8(+) dendritic cell differentiation via interaction with IRF4 and IRF8 to mediate cooperative gene activation. Regulates effector CD8(+) T-cell differentiation by regulating expression of SIRT1. Following DNA damage, part of a differentiation checkpoint that limits self-renewal of hematopoietic stem cells (HSCs): up-regulated by STAT3, leading to differentiation of HSCs, thereby restricting self-renewal of HSCs. The sequence is that of Basic leucine zipper transcriptional factor ATF-like (BATF) from Bos taurus (Bovine).